The sequence spans 484 residues: Adenylyltransferase and sulfurtransferase uba4 (484 aa).

The segment covering 39–49 has biased composition (low complexity); that stretch reads AKAQSAAATTA. A disordered region spans residues 39–58; the sequence is AKAQSAAATTAGDNHDKPRR. ATP is bound by residues Gly-98, Asp-119, 126-130, Lys-143, and 187-188; these read SNLHR and DN. Zn(2+) contacts are provided by Cys-236 and Cys-239. The active-site Glycyl thioester intermediate; for adenylyltransferase activity is Cys-253. Zn(2+) is bound by residues Cys-313 and Cys-316. One can recognise a Rhodanese domain in the interval 370–482; the sequence is PEKTPTLIDV…WREQVDPEWP (113 aa). Cys-437 (cysteine persulfide intermediate; for sulfurtransferase activity) is an active-site residue.

In the N-terminal section; belongs to the HesA/MoeB/ThiF family. UBA4 subfamily. It depends on Zn(2+) as a cofactor.

It is found in the cytoplasm. Its subcellular location is the cytosol. It catalyses the reaction [molybdopterin-synthase sulfur-carrier protein]-C-terminal Gly-Gly + ATP + H(+) = [molybdopterin-synthase sulfur-carrier protein]-C-terminal Gly-Gly-AMP + diphosphate. The catalysed reaction is [molybdopterin-synthase sulfur-carrier protein]-C-terminal Gly-Gly-AMP + S-sulfanyl-L-cysteinyl-[cysteine desulfurase] + AH2 = [molybdopterin-synthase sulfur-carrier protein]-C-terminal-Gly-aminoethanethioate + L-cysteinyl-[cysteine desulfurase] + A + AMP + 2 H(+). The protein operates within tRNA modification; 5-methoxycarbonylmethyl-2-thiouridine-tRNA biosynthesis. Its pathway is cofactor biosynthesis; molybdopterin biosynthesis. In terms of biological role, plays a central role in 2-thiolation of mcm(5)S(2)U at tRNA wobble positions of cytosolic tRNA(Lys), tRNA(Glu) and tRNA(Gln). Also essential during biosynthesis of the molybdenum cofactor. Acts by mediating the C-terminal thiocarboxylation of sulfur carriers urm1 and mocs2a. Its N-terminus first activates urm1 and mocs2a as acyl-adenylates (-COAMP), then the persulfide sulfur on the catalytic cysteine is transferred to urm1 and mocs2a to form thiocarboxylation (-COSH) of their C-terminus. The reaction probably involves hydrogen sulfide that is generated from the persulfide intermediate and that acts as a nucleophile towards urm1 and mocs2a. Subsequently, a transient disulfide bond is formed. Does not use thiosulfate as sulfur donor; nfs1 probably acting as a sulfur donor for thiocarboxylation reactions. This is Adenylyltransferase and sulfurtransferase uba4 from Aspergillus terreus (strain NIH 2624 / FGSC A1156).